A 527-amino-acid polypeptide reads, in one-letter code: Ankyrin repeat domain-containing protein 42 (527 aa).

The interval 1 to 27 is disordered; that stretch reads MPGVANPGPSKSRRETADSSSRKKVHF. Basic and acidic residues predominate over residues 12–21; it reads SRRETADSSS. 10 ANK repeats span residues 25–54, 59–88, 92–121, 125–154, 158–187, 191–220, 228–257, 263–293, 297–326, and 330–360; these read VHFSSIHDAVRAGDVKQLSDIVERGANLNE, HQFTPLHWAAHSGSLECLHWLLWSGADATQ, RGWTAAHIAAIRGQDACLQALIINGANLAT, RGCTPLHLAATHGHSFSLQIMLRSGVDPSV, REWKPVHYASFHGRLGCLQLLVKWGCGIED, NGNLPVHLAAMEGHLHCLKFLLSRMNSATQ, NGENVLDLAQRFLKQNVVEFIQGAQYEGSH, DLAFPGHVAAFKGDLEVLKKLIGDGVINLNE, NGSTPMHKAAGQGHIDCLQWLIEMGAESNI, and AGETPSDVAKRFAHLAAVKLLEGLQKYEIDD. A coiled-coil region spans residues 395 to 484; the sequence is NARMRAHKKI…ETLQKIQVTS (90 aa).

The polypeptide is Ankyrin repeat domain-containing protein 42 (Ankrd42) (Mus musculus (Mouse)).